A 351-amino-acid polypeptide reads, in one-letter code: Cytosolic sulfotransferase 9 (351 aa).

A compositionally biased stretch (basic and acidic residues) spans 1–11 (MDEKDILRNLR). Residues 1 to 24 (MDEKDILRNLREEEEEEEENQSEE) form a disordered region. The span at 12 to 22 (EEEEEEEENQS) shows a compositional bias: acidic residues. 80–85 (KSGTTW) serves as a coordination point for 3'-phosphoadenylyl sulfate. His152 functions as the Proton acceptor in the catalytic mechanism. 3'-phosphoadenylyl sulfate-binding positions include Arg174, Ser182, Tyr252, and 317 to 319 (RKG).

This sequence belongs to the sulfotransferase 1 family. As to expression, expressed in roots and leaves.

The protein localises to the cytoplasm. Its function is as follows. Sulfotransferase that utilizes 3'-phospho-5'-adenylyl sulfate (PAPS) as sulfonate donor. No activity with brassinosteroids. This is Cytosolic sulfotransferase 9 (STO9) from Arabidopsis thaliana (Mouse-ear cress).